The sequence spans 45 residues: MTKRTFGGTSRKRKRVSGFRVRMRSHTGRRVIKSRRKRGRERIAV.

A disordered region spans residues 1–45 (MTKRTFGGTSRKRKRVSGFRVRMRSHTGRRVIKSRRKRGRERIAV). Residues 10 to 45 (SRKRKRVSGFRVRMRSHTGRRVIKSRRKRGRERIAV) show a composition bias toward basic residues.

Belongs to the bacterial ribosomal protein bL34 family.

This Prochlorococcus marinus subsp. pastoris (strain CCMP1986 / NIES-2087 / MED4) protein is Large ribosomal subunit protein bL34.